Here is a 321-residue protein sequence, read N- to C-terminus: Mas-related G-protein coupled receptor member B4 (321 aa).

The Extracellular segment spans residues 1 to 33 (MGTTTLAWNINNTAENGSYTEMFSCITKFNTLN). Residues N11 and N16 are each glycosylated (N-linked (GlcNAc...) asparagine). A helical membrane pass occupies residues 34–54 (FLTVIIAVVGLAGNGIVLWLL). At 55 to 62 (AFHLHRNA) the chain is on the cytoplasmic side. Residues 63 to 83 (FSVYVLNLAGADFLYLFTQVV) form a helical membrane-spanning segment. At 84-97 (HSLECVLQLDNNSF) the chain is on the extracellular side. N94 is a glycosylation site (N-linked (GlcNAc...) asparagine). A helical transmembrane segment spans residues 98–118 (YILLIVTMFAYLAGLCMIAAI). Topologically, residues 119-146 (SAERCLSVMWPIWYHCQRPRHTSAIMCA) are cytoplasmic. Residues 147-167 (LVWVSSLLLSLVVGLGCGFLF) form a helical membrane-spanning segment. The Extracellular segment spans residues 168–172 (SYYDY). The chain crosses the membrane as a helical span at residues 173 to 193 (YFCITLNFITAAFLIVLSVVL). At 194–215 (SVSSLALLVKIVWGSHRIPVTR) the chain is on the cytoplasmic side. Residues 216-236 (FFVTIALTVVVFIYFGMPFGI) traverse the membrane as a helical segment. The Extracellular portion of the chain corresponds to 237 to 257 (CWFLLSRIMEFDSIFFNNVYE). Residues 258–278 (IIEFLSCVNSCANPIIYFLVG) traverse the membrane as a helical segment. Over 279–321 (SIRQHRLRWQSLKLLLQRAMQDTPEEESGERGPSQRSGELETV) the chain is Cytoplasmic. Positions 299 to 321 (QDTPEEESGERGPSQRSGELETV) are disordered.

It belongs to the G-protein coupled receptor 1 family. Mas subfamily.

The protein localises to the membrane. Orphan receptor. Probably involved in the function of nociceptive neurons. May regulate nociceptor function and/or development, including the sensation or modulation of pain. This Mus musculus (Mouse) protein is Mas-related G-protein coupled receptor member B4 (Mrgprb4).